Consider the following 490-residue polypeptide: GTPase Der (490 aa).

EngA-type G domains follow at residues 3–166 (PVVA…MEDL) and 203–376 (IKLA…DSST). GTP-binding positions include 9-16 (GRPNVGKS), 56-60 (DTGGI), 118-121 (NKTD), 209-216 (GRPNVGKS), 256-260 (DTAGV), and 321-324 (NKWD). A KH-like domain is found at 377 to 461 (RRVGTSMLTR…PIRIQFKEGE (85 aa)).

It belongs to the TRAFAC class TrmE-Era-EngA-EngB-Septin-like GTPase superfamily. EngA (Der) GTPase family. In terms of assembly, associates with the 50S ribosomal subunit.

Functionally, GTPase that plays an essential role in the late steps of ribosome biogenesis. This is GTPase Der from Escherichia coli O7:K1 (strain IAI39 / ExPEC).